The sequence spans 270 residues: Phosphonoacetaldehyde hydrolase (270 aa).

The Nucleophile role is filled by D11. The Mg(2+) site is built by D11 and A13. The Schiff-base intermediate with substrate role is filled by K53. D187 is a Mg(2+) binding site.

This sequence belongs to the HAD-like hydrolase superfamily. PhnX family. Homodimer. Mg(2+) is required as a cofactor.

The catalysed reaction is phosphonoacetaldehyde + H2O = acetaldehyde + phosphate + H(+). Involved in phosphonate degradation. The sequence is that of Phosphonoacetaldehyde hydrolase from Salmonella paratyphi C (strain RKS4594).